We begin with the raw amino-acid sequence, 463 residues long: A-type ATP synthase subunit B (463 aa).

It belongs to the ATPase alpha/beta chains family. In terms of assembly, has multiple subunits with at least A(3), B(3), C, D, E, F, H, I and proteolipid K(x).

It is found in the cell membrane. Component of the A-type ATP synthase that produces ATP from ADP in the presence of a proton gradient across the membrane. The B chain is a regulatory subunit. The protein is A-type ATP synthase subunit B of Thermococcus sp. (strain KI).